The following is a 436-amino-acid chain: Anhydro-N-acetylmuramic acid kinase (436 aa).

32–39 (GTSLDGMD) is an ATP binding site.

Belongs to the anhydro-N-acetylmuramic acid kinase family.

The enzyme catalyses 1,6-anhydro-N-acetyl-beta-muramate + ATP + H2O = N-acetyl-D-muramate 6-phosphate + ADP + H(+). It participates in amino-sugar metabolism; 1,6-anhydro-N-acetylmuramate degradation. The protein operates within cell wall biogenesis; peptidoglycan recycling. Its function is as follows. Catalyzes the specific phosphorylation of 1,6-anhydro-N-acetylmuramic acid (anhMurNAc) with the simultaneous cleavage of the 1,6-anhydro ring, generating MurNAc-6-P. Is required for the utilization of anhMurNAc either imported from the medium or derived from its own cell wall murein, and thus plays a role in cell wall recycling. The polypeptide is Anhydro-N-acetylmuramic acid kinase (Psychrobacter arcticus (strain DSM 17307 / VKM B-2377 / 273-4)).